The sequence spans 117 residues: Putative iron-sulfur cluster insertion protein ErpA (117 aa).

Positions 45, 109, and 111 each coordinate iron-sulfur cluster.

This sequence belongs to the HesB/IscA family. In terms of assembly, homodimer. Requires iron-sulfur cluster as cofactor.

Functionally, required for insertion of 4Fe-4S clusters. The sequence is that of Putative iron-sulfur cluster insertion protein ErpA from Chromobacterium violaceum (strain ATCC 12472 / DSM 30191 / JCM 1249 / CCUG 213 / NBRC 12614 / NCIMB 9131 / NCTC 9757 / MK).